Consider the following 745-residue polypeptide: NAD(P)H-quinone oxidoreductase subunit 5, chloroplastic (745 aa).

Helical transmembrane passes span 9–29 (WIIP…LLLF), 50–70 (WAFP…DLSI), 99–119 (IDSL…FVLI), 135–155 (FAYM…CNLI), 157–177 (IYIF…FWFT), 194–214 (IGDF…GSFE), 229–249 (NEVH…GAVA), 268–288 (TPIS…FLVA), 290–310 (LFPL…IGII), 337–357 (LGYM…FHLI), 364–384 (ALLF…VGYS), 406–426 (IAFL…CFWS), 435–455 (WLYS…TAFY), 550–570 (LFPM…AIPF), 610–630 (FSVS…KPFY), and 724–744 (FYLL…YFIL).

The protein belongs to the complex I subunit 5 family. NDH is composed of at least 16 different subunits, 5 of which are encoded in the nucleus.

It localises to the plastid. Its subcellular location is the chloroplast thylakoid membrane. The catalysed reaction is a plastoquinone + NADH + (n+1) H(+)(in) = a plastoquinol + NAD(+) + n H(+)(out). It catalyses the reaction a plastoquinone + NADPH + (n+1) H(+)(in) = a plastoquinol + NADP(+) + n H(+)(out). Functionally, NDH shuttles electrons from NAD(P)H:plastoquinone, via FMN and iron-sulfur (Fe-S) centers, to quinones in the photosynthetic chain and possibly in a chloroplast respiratory chain. The immediate electron acceptor for the enzyme in this species is believed to be plastoquinone. Couples the redox reaction to proton translocation, and thus conserves the redox energy in a proton gradient. The protein is NAD(P)H-quinone oxidoreductase subunit 5, chloroplastic (ndhF) of Gossypium barbadense (Sea Island cotton).